We begin with the raw amino-acid sequence, 384 residues long: 8-amino-7-oxononanoate synthase (384 aa).

Arginine 21 contacts substrate. Residue 108 to 109 (GF) participates in pyridoxal 5'-phosphate binding. Histidine 133 is a substrate binding site. The pyridoxal 5'-phosphate site is built by serine 179, histidine 207, and threonine 233. An N6-(pyridoxal phosphate)lysine modification is found at lysine 236. Substrate is bound at residue threonine 352.

It belongs to the class-II pyridoxal-phosphate-dependent aminotransferase family. BioF subfamily. As to quaternary structure, homodimer. The cofactor is pyridoxal 5'-phosphate.

The enzyme catalyses 6-carboxyhexanoyl-[ACP] + L-alanine + H(+) = (8S)-8-amino-7-oxononanoate + holo-[ACP] + CO2. It functions in the pathway cofactor biosynthesis; biotin biosynthesis. In terms of biological role, catalyzes the decarboxylative condensation of pimeloyl-[acyl-carrier protein] and L-alanine to produce 8-amino-7-oxononanoate (AON), [acyl-carrier protein], and carbon dioxide. This Escherichia coli O6:H1 (strain CFT073 / ATCC 700928 / UPEC) protein is 8-amino-7-oxononanoate synthase.